An 89-amino-acid chain; its full sequence is Small ribosomal subunit protein uS14A (89 aa).

The tract at residues 34–54 is disordered; the sequence is ESLRKLPRDSNPNRLKNRDKI.

Belongs to the universal ribosomal protein uS14 family. Part of the 30S ribosomal subunit. Contacts proteins S3 and S10.

In terms of biological role, binds 16S rRNA, required for the assembly of 30S particles and may also be responsible for determining the conformation of the 16S rRNA at the A site. The polypeptide is Small ribosomal subunit protein uS14A (Streptococcus pyogenes serotype M1).